A 607-amino-acid polypeptide reads, in one-letter code: UvrABC system protein C (607 aa).

Residues 16–94 form the GIY-YIG domain; that stretch reads GRPGVYRMFD…IKEWRPPYNI (79 aa). The UVR domain maps to 203–238; sequence QQLGNELNAEMEKAAMALNFEKAAELRDQIALLRRV.

The protein belongs to the UvrC family. In terms of assembly, interacts with UvrB in an incision complex.

Its subcellular location is the cytoplasm. Functionally, the UvrABC repair system catalyzes the recognition and processing of DNA lesions. UvrC both incises the 5' and 3' sides of the lesion. The N-terminal half is responsible for the 3' incision and the C-terminal half is responsible for the 5' incision. The protein is UvrABC system protein C of Pseudomonas entomophila (strain L48).